We begin with the raw amino-acid sequence, 236 residues long: Putative (5-formylfuran-3-yl)methyl phosphate synthase (236 aa).

The active-site Schiff-base intermediate with substrate is Lys-38. The active-site Proton acceptor is the Lys-94.

It belongs to the MfnB family.

It carries out the reaction 2 D-glyceraldehyde 3-phosphate = 4-(hydroxymethyl)-2-furancarboxaldehyde phosphate + phosphate + 2 H2O. Functionally, catalyzes the formation of 4-(hydroxymethyl)-2-furancarboxaldehyde phosphate (4-HFC-P) from two molecules of glyceraldehyde-3-P (GA-3-P). This chain is Putative (5-formylfuran-3-yl)methyl phosphate synthase, found in Methylorubrum extorquens (Methylobacterium dichloromethanicum).